A 126-amino-acid chain; its full sequence is uncharacterized protein (126 aa).

This is an uncharacterized protein from Invertebrate iridescent virus 6 (IIV-6).